The primary structure comprises 1412 residues: Ecdysone-induced protein 75B, isoform B (1412 aa).

A compositionally biased stretch (low complexity) spans 1–14 (MEAVQAAAAATSSG). 4 disordered regions span residues 1-96 (MEAV…PGGT), 110-204 (QRAT…QQHV), 258-298 (QYQQ…VPPP), and 321-448 (HFQQ…SIPD). Gly residues predominate over residues 15-25 (GSSGSVPGSGS). Over residues 32 to 57 (IKTEPIDFEMLHLEENERQQDIEREP) the composition is skewed to basic and acidic residues. The span at 58–68 (SSSNSNSNSNS) shows a compositional bias: low complexity. Residues 69-81 (LTPQRYTHVQVQT) are compositionally biased toward polar residues. The segment covering 87–96 (PTGLTTPGGT) has biased composition (low complexity). A compositionally biased stretch (polar residues) spans 124 to 133 (YSQQQGTAAS). The span at 135–150 (SAPPETTALLTTTSGT) shows a compositional bias: low complexity. Positions 151–164 (PQIIITRTLPSNQH) are enriched in polar residues. The span at 177 to 203 (HHYQQQQPQRQQSPPPLHHQQQQQQQH) shows a compositional bias: low complexity. Pro residues predominate over residues 266–284 (PLAPPPPPPPPPPPPPPPQ). Low complexity-rich tracts occupy residues 323 to 371 (QQQQ…SSHI), 378 to 403 (SSSS…NSVM), and 417 to 447 (ASSS…SSIP). Residues 455–531 (TVLCRVCGDK…VGMSRDAVRF (77 aa)) constitute a DNA-binding region (nuclear receptor). 2 consecutive NR C4-type zinc fingers follow at residues 458–478 (CRVC…CEGC) and 495–514 (CTKN…CQYC). One can recognise an NR LBD domain in the interval 565–813 (DQPRLLAAVL…QQMWSMEDGN (249 aa)). 6 disordered regions span residues 837-878 (KSPL…SALA), 984-1021 (LDSP…SVDD), 1044-1064 (VSVS…KRQI), 1108-1174 (AEAD…SSHS), 1204-1317 (ENST…SNSA), and 1368-1401 (VTVT…NPGL). 5 stretches are compositionally biased toward low complexity: residues 854–866 (GSPS…GVSL), 1005–1017 (SSGG…SPRS), 1044–1058 (VSVS…STSS), 1110–1155 (ADAS…AQSQ), and 1163–1174 (SSPKASMASSHS). 2 stretches are compositionally biased toward polar residues: residues 1206–1219 (STAA…VGNR) and 1231–1253 (AVQN…QRQQ). Composition is skewed to low complexity over residues 1254–1290 (SVSP…SASS), 1299–1317 (STSN…SNSA), and 1372–1400 (ASNG…PNPG).

The protein belongs to the nuclear hormone receptor family. NR1 subfamily.

The protein localises to the nucleus. Implicated in the regulation of ecdysone-triggered gene hierarchies. Probably plays a key role in mediating the regulation of the larval molt by 20-OH-ecdysone. The chain is Ecdysone-induced protein 75B, isoform B (Eip75B) from Drosophila melanogaster (Fruit fly).